We begin with the raw amino-acid sequence, 120 residues long: Large ribosomal subunit protein P3y (120 aa).

The segment covering 81–92 (GGAAAGGGGGGE) has biased composition (gly residues). The disordered stretch occupies residues 81–120 (GGAAAGGGGGGEAAAATKEEEKKKEESEEEEGDFGFDLFG). Basic and acidic residues predominate over residues 97–106 (TKEEEKKKEE).

The protein belongs to the eukaryotic ribosomal protein P1/P2 family.

In terms of biological role, plays an important role in the elongation step of protein synthesis. This is Large ribosomal subunit protein P3y (RPP3B) from Arabidopsis thaliana (Mouse-ear cress).